The following is a 490-amino-acid chain: Asparagine--tRNA ligase (490 aa).

It belongs to the class-II aminoacyl-tRNA synthetase family. Homodimer.

The protein resides in the cytoplasm. The catalysed reaction is tRNA(Asn) + L-asparagine + ATP = L-asparaginyl-tRNA(Asn) + AMP + diphosphate + H(+). This chain is Asparagine--tRNA ligase, found in Rhodopirellula baltica (strain DSM 10527 / NCIMB 13988 / SH1).